The following is an 885-amino-acid chain: Alanine--tRNA ligase (885 aa).

Residues His574, His578, Cys685, and His689 each contribute to the Zn(2+) site.

The protein belongs to the class-II aminoacyl-tRNA synthetase family. It depends on Zn(2+) as a cofactor.

The protein resides in the cytoplasm. It catalyses the reaction tRNA(Ala) + L-alanine + ATP = L-alanyl-tRNA(Ala) + AMP + diphosphate. In terms of biological role, catalyzes the attachment of alanine to tRNA(Ala) in a two-step reaction: alanine is first activated by ATP to form Ala-AMP and then transferred to the acceptor end of tRNA(Ala). Also edits incorrectly charged Ser-tRNA(Ala) and Gly-tRNA(Ala) via its editing domain. This chain is Alanine--tRNA ligase, found in Deinococcus geothermalis (strain DSM 11300 / CIP 105573 / AG-3a).